Reading from the N-terminus, the 457-residue chain is Multidrug resistance protein MdtK (457 aa).

12 consecutive transmembrane segments (helical) span residues 11 to 31, 53 to 73, 93 to 113, 127 to 147, 160 to 180, 189 to 209, 243 to 263, 276 to 296, 314 to 334, 350 to 370, 387 to 407, and 418 to 438; these read LLAL…MGFV, IWLP…PVIA, WLAG…GYII, AVGY…FQVA, GMVM…IFIY, GGVG…LAMV, LPIA…ALLV, IALN…AAVT, AART…IFTV, VVTL…SDSI, IFYI…YILA, and PAGF…MMML.

It belongs to the multi antimicrobial extrusion (MATE) (TC 2.A.66.1) family. MdtK subfamily.

The protein localises to the cell inner membrane. Multidrug efflux pump that functions probably as a Na(+)/drug antiporter. This chain is Multidrug resistance protein MdtK, found in Escherichia coli O139:H28 (strain E24377A / ETEC).